The chain runs to 197 residues: Guanylate kinase (197 aa).

Residues Met1–Lys30 form a disordered region. Residues Pro17–Val197 enclose the Guanylate kinase-like domain. Gly24–Ser31 provides a ligand contact to ATP.

It belongs to the guanylate kinase family.

It localises to the cytoplasm. The enzyme catalyses GMP + ATP = GDP + ADP. Functionally, essential for recycling GMP and indirectly, cGMP. This is Guanylate kinase (gmk) from Streptomyces coelicolor (strain ATCC BAA-471 / A3(2) / M145).